The sequence spans 816 residues: Leucine--tRNA ligase (816 aa).

A 'HIGH' region motif is present at residues 40–51; the sequence is SYPSGAQLHAGH. The short motif at 576–580 is the 'KMSKS' region element; the sequence is KMSKS. Residue lysine 579 coordinates ATP.

This sequence belongs to the class-I aminoacyl-tRNA synthetase family.

It localises to the cytoplasm. It catalyses the reaction tRNA(Leu) + L-leucine + ATP = L-leucyl-tRNA(Leu) + AMP + diphosphate. This Clostridium beijerinckii (strain ATCC 51743 / NCIMB 8052) (Clostridium acetobutylicum) protein is Leucine--tRNA ligase.